The sequence spans 117 residues: Large ribosomal subunit protein bL20c (117 aa).

The protein belongs to the bacterial ribosomal protein bL20 family.

Its subcellular location is the plastid. It localises to the chloroplast. In terms of biological role, binds directly to 23S ribosomal RNA and is necessary for the in vitro assembly process of the 50S ribosomal subunit. It is not involved in the protein synthesizing functions of that subunit. The protein is Large ribosomal subunit protein bL20c of Phalaenopsis aphrodite subsp. formosana (Moth orchid).